The sequence spans 483 residues: Xylulose kinase (483 aa).

79-80 lines the substrate pocket; the sequence is MH.

This sequence belongs to the FGGY kinase family.

The enzyme catalyses D-xylulose + ATP = D-xylulose 5-phosphate + ADP + H(+). Its function is as follows. Catalyzes the phosphorylation of D-xylulose to D-xylulose 5-phosphate. This chain is Xylulose kinase, found in Staphylococcus xylosus.